The following is a 72-amino-acid chain: MNKKTLLVIFFVTMLIVDEVNSFRFGSFLKKVWKSKLAKKLRSKGKQLLKDYANKVLNGPEEEAAAPAERRR.

A signal peptide spans 1–22 (MNKKTLLVIFFVTMLIVDEVNS). Residues 70–72 (RRR) constitute a propeptide that is removed on maturation.

This sequence belongs to the non-disulfide-bridged peptide (NDBP) superfamily. Long chain multifunctional peptide (group 2) family. In terms of tissue distribution, expressed by the venom gland.

Its subcellular location is the secreted. Amphipathic peptide that shows bradykinin potentiating activity and antimicrobial activities against bacteria and fungi. Has higher antibacterial activities against Gram-negative than against Gram-positive bacteria. Also inhibits NADPH oxidase-dependent superoxide production (IC(50) is 0.4 uM on granulocytes stimulated with PMA, IC(50) is 0.51 uM on HL-60 cells undifferentiated and IC(50) is 0.53 uM on HL-60 cells treated with DMSO). The C-terminal peptide shows a higher bradykinin potentiating activity than the complete peptide. This chain is Bradykinin-potentiating peptide BmKbpp, found in Olivierus martensii (Manchurian scorpion).